The sequence spans 472 residues: Arginine biosynthesis bifunctional protein ArgJ, mitochondrial (472 aa).

Positions 200, 229, 240, 327, 467, and 472 each coordinate substrate. Residue Thr-240 is the Nucleophile of the active site.

It belongs to the ArgJ family. In terms of assembly, heterodimer of an alpha and a beta chain. The alpha and beta chains are autoproteolytically processed from a single precursor protein within the mitochondrion.

Its subcellular location is the mitochondrion matrix. It carries out the reaction N(2)-acetyl-L-ornithine + L-glutamate = N-acetyl-L-glutamate + L-ornithine. It catalyses the reaction L-glutamate + acetyl-CoA = N-acetyl-L-glutamate + CoA + H(+). It participates in amino-acid biosynthesis; L-arginine biosynthesis; L-ornithine and N-acetyl-L-glutamate from L-glutamate and N(2)-acetyl-L-ornithine (cyclic): step 1/1. It functions in the pathway amino-acid biosynthesis; L-arginine biosynthesis; N(2)-acetyl-L-ornithine from L-glutamate: step 1/4. Catalyzes two activities which are involved in the cyclic version of arginine biosynthesis: the synthesis of acetylglutamate from glutamate and acetyl-CoA, and of ornithine by transacetylation between acetylornithine and glutamate. The polypeptide is Arginine biosynthesis bifunctional protein ArgJ, mitochondrial (Talaromyces marneffei (strain ATCC 18224 / CBS 334.59 / QM 7333) (Penicillium marneffei)).